We begin with the raw amino-acid sequence, 315 residues long: Methionyl-tRNA formyltransferase (315 aa).

Position 113-116 (113-116 (SLLP)) interacts with (6S)-5,6,7,8-tetrahydrofolate.

This sequence belongs to the Fmt family.

The enzyme catalyses L-methionyl-tRNA(fMet) + (6R)-10-formyltetrahydrofolate = N-formyl-L-methionyl-tRNA(fMet) + (6S)-5,6,7,8-tetrahydrofolate + H(+). Its function is as follows. Attaches a formyl group to the free amino group of methionyl-tRNA(fMet). The formyl group appears to play a dual role in the initiator identity of N-formylmethionyl-tRNA by promoting its recognition by IF2 and preventing the misappropriation of this tRNA by the elongation apparatus. This Escherichia fergusonii (strain ATCC 35469 / DSM 13698 / CCUG 18766 / IAM 14443 / JCM 21226 / LMG 7866 / NBRC 102419 / NCTC 12128 / CDC 0568-73) protein is Methionyl-tRNA formyltransferase.